Reading from the N-terminus, the 90-residue chain is Conotoxin Ca8.2 (90 aa).

The signal sequence occupies residues 1–21; the sequence is MMLKMGAMFVLLLLFILPSSQ. The propeptide occupies 22–46; the sequence is QEGDVQARKTHLKRGFYGTLAMSTR. Residue glutamine 89 is modified to Glutamine amide.

It belongs to the conotoxin S superfamily. Post-translationally, contains 5 disulfide bonds. Expressed by the venom duct.

It is found in the secreted. This is Conotoxin Ca8.2 from Conus caracteristicus (Characteristic cone).